The sequence spans 121 residues: Small ribosomal subunit protein bS16m (121 aa).

This sequence belongs to the bacterial ribosomal protein bS16 family. In terms of assembly, component of the mitochondrial small ribosomal subunit (mt-SSU). Mature yeast 74S mitochondrial ribosomes consist of a small (37S) and a large (54S) subunit. The 37S small subunit contains a 15S ribosomal RNA (15S mt-rRNA) and 34 different proteins. The 54S large subunit contains a 21S rRNA (21S mt-rRNA) and 46 different proteins.

It localises to the mitochondrion. Functionally, component of the mitochondrial ribosome (mitoribosome), a dedicated translation machinery responsible for the synthesis of mitochondrial genome-encoded proteins, including at least some of the essential transmembrane subunits of the mitochondrial respiratory chain. The mitoribosomes are attached to the mitochondrial inner membrane and translation products are cotranslationally integrated into the membrane. The sequence is that of Small ribosomal subunit protein bS16m (MRPS16) from Saccharomyces cerevisiae (strain ATCC 204508 / S288c) (Baker's yeast).